The sequence spans 488 residues: ATP synthase subunit beta (488 aa).

164-171 contributes to the ATP binding site; sequence GGAGMGKT.

It belongs to the ATPase alpha/beta chains family. In terms of assembly, F-type ATPases have 2 components, CF(1) - the catalytic core - and CF(0) - the membrane proton channel. CF(1) has five subunits: alpha(3), beta(3), gamma(1), delta(1), epsilon(1). CF(0) has four main subunits: a(1), b(1), b'(1) and c(9-12).

Its subcellular location is the cellular thylakoid membrane. The catalysed reaction is ATP + H2O + 4 H(+)(in) = ADP + phosphate + 5 H(+)(out). In terms of biological role, produces ATP from ADP in the presence of a proton gradient across the membrane. The catalytic sites are hosted primarily by the beta subunits. This Synechococcus sp. (strain RCC307) protein is ATP synthase subunit beta.